The sequence spans 359 residues: Aminomethyltransferase (359 aa).

The protein belongs to the GcvT family. As to quaternary structure, the glycine cleavage system is composed of four proteins: P, T, L and H.

The catalysed reaction is N(6)-[(R)-S(8)-aminomethyldihydrolipoyl]-L-lysyl-[protein] + (6S)-5,6,7,8-tetrahydrofolate = N(6)-[(R)-dihydrolipoyl]-L-lysyl-[protein] + (6R)-5,10-methylene-5,6,7,8-tetrahydrofolate + NH4(+). Functionally, the glycine cleavage system catalyzes the degradation of glycine. In Alcanivorax borkumensis (strain ATCC 700651 / DSM 11573 / NCIMB 13689 / SK2), this protein is Aminomethyltransferase.